Here is a 444-residue protein sequence, read N- to C-terminus: Xylose isomerase (444 aa).

Active-site residues include histidine 101 and aspartate 104. Mg(2+) is bound by residues glutamate 232, glutamate 268, histidine 271, aspartate 296, aspartate 307, aspartate 309, and aspartate 339.

This sequence belongs to the xylose isomerase family. Homotetramer. The cofactor is Mg(2+).

The protein localises to the cytoplasm. The catalysed reaction is alpha-D-xylose = alpha-D-xylulofuranose. This Thermotoga maritima (strain ATCC 43589 / DSM 3109 / JCM 10099 / NBRC 100826 / MSB8) protein is Xylose isomerase.